Reading from the N-terminus, the 340-residue chain is MAQITTTDANEFSSSAEFIPMRGFSNCHLQTMLPRLFRRQVKFTPYWQRLELPDGDFVDLAWSENPAQAQHKPRLVVFHGLEGSLNSPYAHGLVEAAQKRGWLGVVMHFRGCSGEPNRMHRIYHSGETEDASWFLRWLQREFGHAPTAAVGYSLGGNMLACLLAKEGNDLPVDAAVIVSAPFMLEACSYHMEKGFSRVYQRYLLNLLKANAARKLAAYPGTLPINLAQLKSVRRIREFDDLITARIHGYADAIDYYRQCSAMPMLNRIAKPTLIIHAKDDPFMDHQVIPKPESLPPQVEYQLTEHGGHVGFIGGTLLHPQMWLESRIPDWLTTYLEAKSC.

In terms of domain architecture, AB hydrolase-1 spans 73–312; the sequence is PRLVVFHGLE…TEHGGHVGFI (240 aa). Active-site charge relay system residues include Ser-153, Asp-280, and His-308.

It belongs to the AB hydrolase superfamily. AB hydrolase 4 family.

This chain is Putative esterase YheT (yheT), found in Escherichia coli (strain K12).